The primary structure comprises 198 residues: ATP synthase subunit delta (198 aa).

It belongs to the ATPase delta chain family. As to quaternary structure, F-type ATPases have 2 components, F(1) - the catalytic core - and F(0) - the membrane proton channel. F(1) has five subunits: alpha(3), beta(3), gamma(1), delta(1), epsilon(1). F(0) has three main subunits: a(1), b(2) and c(10-14). The alpha and beta chains form an alternating ring which encloses part of the gamma chain. F(1) is attached to F(0) by a central stalk formed by the gamma and epsilon chains, while a peripheral stalk is formed by the delta and b chains.

The protein localises to the cell inner membrane. Its function is as follows. F(1)F(0) ATP synthase produces ATP from ADP in the presence of a proton or sodium gradient. F-type ATPases consist of two structural domains, F(1) containing the extramembraneous catalytic core and F(0) containing the membrane proton channel, linked together by a central stalk and a peripheral stalk. During catalysis, ATP synthesis in the catalytic domain of F(1) is coupled via a rotary mechanism of the central stalk subunits to proton translocation. This protein is part of the stalk that links CF(0) to CF(1). It either transmits conformational changes from CF(0) to CF(1) or is implicated in proton conduction. In Gluconacetobacter diazotrophicus (strain ATCC 49037 / DSM 5601 / CCUG 37298 / CIP 103539 / LMG 7603 / PAl5), this protein is ATP synthase subunit delta.